A 138-amino-acid chain; its full sequence is Basic phospholipase A2 homolog Vur-S49 (138 aa).

Positions 1–16 (MRALWIVAVCLIGVEG) are cleaved as a signal peptide. 7 disulfides stabilise this stretch: cysteine 42–cysteine 131, cysteine 44–cysteine 60, cysteine 59–cysteine 111, cysteine 65–cysteine 138, cysteine 66–cysteine 104, cysteine 73–cysteine 97, and cysteine 91–cysteine 102. The segment at 121 to 133 (KKYKVYLRFKCKG) is important for membrane-damaging activities in eukaryotes and bacteria; heparin-binding.

The protein belongs to the phospholipase A2 family. Group II subfamily. S49 sub-subfamily. Expressed by the venom gland.

The protein resides in the secreted. Its function is as follows. Snake venom phospholipase A2 homolog that lacks enzymatic activity. Is able to suppress the acetylcholine (ACh)-evoked current mediated by alpha-7 (CHRNA7)-similar nAChRs in L.stagnalis neurons (IC(50)=2.18 uM). This activity is only partially reversible and seems to be non-competitive. The chain is Basic phospholipase A2 homolog Vur-S49 from Vipera renardi (Steppe viper).